The sequence spans 1139 residues: Hapless 2 (1139 aa).

The signal sequence occupies residues 1 to 22 (MCRAIAVALIVYLAQHYILAHA). The Extracellular segment spans residues 23-630 (EVIASGRLEK…TKKCWSKFGR (608 aa)). 7 cysteine pairs are disulfide-bonded: Cys-33–Cys-44, Cys-136–Cys-164, Cys-147–Cys-210, Cys-165–Cys-383, Cys-167–Cys-190, Cys-366–Cys-390, and Cys-475–Cys-482. Residues 241–272 (APSPTTATTSATPRTNNSSSANSTNSTNSPAP) show a composition bias toward low complexity. A disordered region spans residues 241-283 (APSPTTATTSATPRTNNSSSANSTNSTNSPAPQFLSPPAPSTR). Residue Asn-497 is glycosylated (N-linked (GlcNAc...) asparagine). A disulfide bond links Cys-515 and Cys-556. O-linked (GlcNAc...) threonine glycosylation occurs at Thr-577. A helical membrane pass occupies residues 631-651 (LLGIIGGALVGLGLLAVALKF). Topologically, residues 652–1139 (GWLASLAASC…PVYDWQAPPK (488 aa)) are cytoplasmic. Disordered stretches follow at residues 689–719 (GGGQQQQQLPPAASHAMSPPQQQQRSHAEVA) and 741–1139 (HGGG…APPK). A compositionally biased stretch (basic and acidic residues) spans 753 to 767 (QHADTRHLQDRDSRA). Low complexity predominate over residues 770-789 (GGASIGSSSAGGSSSLSSYS). Positions 829–851 (WDARGRSPRVADEHGSPRQRYDG) are enriched in basic and acidic residues. Over residues 868 to 884 (YDGGSGGGGGGGGGGYG) the composition is skewed to gly residues. A compositionally biased stretch (pro residues) spans 887-904 (APPPQGPPPHPVGAPPPP). Composition is skewed to gly residues over residues 919–943 (PGGGGGGGGGGGGGGGGGSGGGVDQ) and 955–965 (RGGGGPGGMRG). A compositionally biased stretch (pro residues) spans 978–991 (GPHPHAPPPPPPPQ). Residues 1018–1029 (GREEEAGGDRRG) are compositionally biased toward basic and acidic residues. Over residues 1040-1049 (GGRGAGGGRG) the composition is skewed to gly residues. Positions 1054-1067 (IGSPPPGPLQPPEY) are enriched in pro residues. Composition is skewed to gly residues over residues 1078 to 1096 (GAGGGRGGVGGDGGGGGVG) and 1106 to 1118 (GGRGGGGGGGRGR).

This sequence belongs to the HAP2/GCS1 family. As to quaternary structure, monomer. Homotrimer. Membrane contact and insertion (via its extracellular domain) into a lipid membrane probably triggers trimerization. In terms of processing, the protein present at the cell membrane is rapidly degraded after fusion between male (minus) and female (plus) gametes, contrary to the protein present in intracellular pools. This may represent a mechanism to avoid fusion of several male gametes with a single female gamete. N-glycosylated.

The protein localises to the cell membrane. It is found in the cell projection. The protein resides in the cytoplasmic vesicle membrane. During fertilization, required on male (minus) gametes for their fusion with female (plus) gametes. Required for membrane fusion, but not for the initial adhesion between gametes. Inserts (via its extracellular domain) into lipid membranes (in vitro). Probably initiates the fusion of gamete cell membranes by inserting its extracellular domain into the cell membrane of a female gamete. The chain is Hapless 2 from Chlamydomonas reinhardtii (Chlamydomonas smithii).